Here is a 348-residue protein sequence, read N- to C-terminus: MQNNNPCGLDGFAFLEFSGPDRNKLHQQFSEMGFQAVAHHKNQDITLFKQGEIQFIVNAASHCQAEAHASTHGPGACAMGFKVKDAKAAFQHAIAHGGIAFQDAPHANHGLPAIQAIGGSVIYFVDEEHQPFSHEWNITSSEPVVGNGLTAIDHLTHNVYRGNMDKWASFYASIFNFQEIRFFNIKGKMTGLVSRALGSPCGKIKIPLNESKDDLSQIEEFLHEYHGEGIQHIALNTNDIYKTVNGLRKQGVKFLDVPDTYYEMINDRLPWHKEPLNQLHAEKILIDGEADPKDGLLLQIFTENIFGPVFFEIIQRKGNQGFGEGNFQALFEAIERDQVRRGTLKELT.

VOC domains follow at residues 11-141 and 151-303; these read GFAF…ITSS and AIDH…IFTE. Fe cation contacts are provided by histidine 154, histidine 232, and glutamate 312.

Belongs to the 4HPPD family. It depends on Fe cation as a cofactor.

It carries out the reaction 3-(4-hydroxyphenyl)pyruvate + O2 = homogentisate + CO2. Its function is as follows. Catalyzes the transformation of p-hydroxyphenylpyruvate into HGA. Has hemolytic and brown pigment production activity. This Legionella pneumophila (strain Corby) protein is 4-hydroxyphenylpyruvate dioxygenase (lly).